The sequence spans 474 residues: Ubiquinol-cytochrome-c reductase complex core protein 2, mitochondrial (474 aa).

The N-terminal 42 residues, 1-42 (MKSVVRSKGTQALFRRFSSALGDSINPNQVGVGDNVIRVNGR), are a transit peptide targeting the mitochondrion.

Belongs to the peptidase M16 family. UQCRC2/QCR2 subfamily. Component of the ubiquinol-cytochrome c oxidoreductase (cytochrome b-c1 complex, complex III, CIII), a multisubunit enzyme composed of 3 respiratory subunits cytochrome b, cytochrome c1 and Rieske protein, 2 core protein subunits, and additional low-molecular weight protein subunits. The complex exists as an obligatory dimer and forms supercomplexes (SCs) in the inner mitochondrial membrane with cytochrome c oxidase (complex IV, CIV).

Its subcellular location is the mitochondrion inner membrane. Component of the ubiquinol-cytochrome c oxidoreductase, a multisubunit transmembrane complex that is part of the mitochondrial electron transport chain which drives oxidative phosphorylation. The respiratory chain contains 3 multisubunit complexes succinate dehydrogenase (complex II, CII), ubiquinol-cytochrome c oxidoreductase (cytochrome b-c1 complex, complex III, CIII) and cytochrome c oxidase (complex IV, CIV), that cooperate to transfer electrons derived from NADH and succinate to molecular oxygen, creating an electrochemical gradient over the inner membrane that drives transmembrane transport and the ATP synthase. The cytochrome b-c1 complex catalyzes electron transfer from ubiquinol to cytochrome c, linking this redox reaction to translocation of protons across the mitochondrial inner membrane, with protons being carried across the membrane as hydrogens on the quinol. In the process called Q cycle, 2 protons are consumed from the matrix, 4 protons are released into the intermembrane space and 2 electrons are passed to cytochrome c. This chain is Ubiquinol-cytochrome-c reductase complex core protein 2, mitochondrial, found in Euglena gracilis.